Consider the following 166-residue polypeptide: Lithostathine-1-beta (166 aa).

An N-terminal signal peptide occupies residues 1 to 22 (MAQTNSFFMLISSLMFLSLSQG). The O-linked (GalNAc...) threonine glycan is linked to Thr27. A C-type lectin domain is found at 34 to 164 (ISCPEGTNAY…EKKFSFVCKF (131 aa)). 3 disulfides stabilise this stretch: Cys36/Cys47, Cys64/Cys162, and Cys137/Cys154.

Post-translationally, all O-linked glycans consist of Gal-GlcNAc-Gal-GalNAc tetrasaccharide core and get elongated (microheterogeneity).

It localises to the secreted. Might act as an inhibitor of spontaneous calcium carbonate precipitation. May be associated with neuronal sprouting in brain, and with brain and pancreas regeneration. This is Lithostathine-1-beta (REG1B) from Homo sapiens (Human).